The primary structure comprises 275 residues: Large ribosomal subunit protein uL2 (275 aa).

Positions 222–275 are disordered; that stretch reads GKVMNPVDHPHGGGEGRNPIGRNPSTPWGKLAMGVKTRGNKKSDRLIVKRRNKK.

It belongs to the universal ribosomal protein uL2 family. As to quaternary structure, part of the 50S ribosomal subunit. Forms a bridge to the 30S subunit in the 70S ribosome.

Functionally, one of the primary rRNA binding proteins. Required for association of the 30S and 50S subunits to form the 70S ribosome, for tRNA binding and peptide bond formation. It has been suggested to have peptidyltransferase activity; this is somewhat controversial. Makes several contacts with the 16S rRNA in the 70S ribosome. The chain is Large ribosomal subunit protein uL2 from Desulforamulus reducens (strain ATCC BAA-1160 / DSM 100696 / MI-1) (Desulfotomaculum reducens).